A 382-amino-acid polypeptide reads, in one-letter code: Dual-specificity RNA methyltransferase RlmN (382 aa).

Glu94 acts as the Proton acceptor in catalysis. In terms of domain architecture, Radical SAM core spans Glu100–Asp336. An intrachain disulfide couples Cys107 to Cys342. 3 residues coordinate [4Fe-4S] cluster: Cys114, Cys118, and Cys121. Residues Gly168 to Glu169, Ser200, Ser222 to His224, and Asn299 each bind S-adenosyl-L-methionine. Cys342 serves as the catalytic S-methylcysteine intermediate.

It belongs to the radical SAM superfamily. RlmN family. [4Fe-4S] cluster is required as a cofactor.

It localises to the cytoplasm. The catalysed reaction is adenosine(2503) in 23S rRNA + 2 reduced [2Fe-2S]-[ferredoxin] + 2 S-adenosyl-L-methionine = 2-methyladenosine(2503) in 23S rRNA + 5'-deoxyadenosine + L-methionine + 2 oxidized [2Fe-2S]-[ferredoxin] + S-adenosyl-L-homocysteine. It catalyses the reaction adenosine(37) in tRNA + 2 reduced [2Fe-2S]-[ferredoxin] + 2 S-adenosyl-L-methionine = 2-methyladenosine(37) in tRNA + 5'-deoxyadenosine + L-methionine + 2 oxidized [2Fe-2S]-[ferredoxin] + S-adenosyl-L-homocysteine. In terms of biological role, specifically methylates position 2 of adenine 2503 in 23S rRNA and position 2 of adenine 37 in tRNAs. m2A2503 modification seems to play a crucial role in the proofreading step occurring at the peptidyl transferase center and thus would serve to optimize ribosomal fidelity. This is Dual-specificity RNA methyltransferase RlmN from Legionella pneumophila subsp. pneumophila (strain Philadelphia 1 / ATCC 33152 / DSM 7513).